Reading from the N-terminus, the 465-residue chain is tRNA modification GTPase MnmE (465 aa).

Arg21, Glu85, and Lys124 together coordinate (6S)-5-formyl-5,6,7,8-tetrahydrofolate. Positions 220 to 387 constitute a TrmE-type G domain; sequence GVPVAIIGET…LQKMLINAAH (168 aa). A K(+)-binding site is contributed by Asn230. Residues 230 to 235, 249 to 255, 274 to 277, and 337 to 340 each bind GTP; these read NAGKST, SDIHGTT, DTAG, and NKAD. A Mg(2+)-binding site is contributed by Ser234. Residues Ser249, Ile251, and Thr254 each contribute to the K(+) site. Thr255 serves as a coordination point for Mg(2+). (6S)-5-formyl-5,6,7,8-tetrahydrofolate is bound at residue Lys465.

The protein belongs to the TRAFAC class TrmE-Era-EngA-EngB-Septin-like GTPase superfamily. TrmE GTPase family. In terms of assembly, homodimer. Heterotetramer of two MnmE and two MnmG subunits. It depends on K(+) as a cofactor.

The protein resides in the cytoplasm. Exhibits a very high intrinsic GTPase hydrolysis rate. Involved in the addition of a carboxymethylaminomethyl (cmnm) group at the wobble position (U34) of certain tRNAs, forming tRNA-cmnm(5)s(2)U34. The protein is tRNA modification GTPase MnmE of Bacteroides thetaiotaomicron (strain ATCC 29148 / DSM 2079 / JCM 5827 / CCUG 10774 / NCTC 10582 / VPI-5482 / E50).